Here is a 152-residue protein sequence, read N- to C-terminus: CASP-like protein 5B3 (152 aa).

Topologically, residues 1-21 (MIDIPGTPGTLTGLVLRISQC) are cytoplasmic. 2 consecutive transmembrane segments (helical) span residues 22–42 (VFAA…SFTA) and 43–63 (FCYL…LAIL). Residues 64 to 77 (DTFALVRKKTLLSP) are Extracellular-facing. A helical transmembrane segment spans residues 78–98 (VLVSLFVVGDWVTSTLSLAGA). Topologically, residues 99–127 (SSSAGITVLYFGDLGSCSFEAECWKYQLS) are cytoplasmic. Residues 128–148 (VALAFLCWITIAVSSLTTLWL) traverse the membrane as a helical segment. The Extracellular portion of the chain corresponds to 149–152 (LASA).

The protein belongs to the Casparian strip membrane proteins (CASP) family. Homodimer and heterodimers. As to expression, expressed in the stele of the root and in leaves.

It is found in the cell membrane. This is CASP-like protein 5B3 from Arabidopsis thaliana (Mouse-ear cress).